The primary structure comprises 407 residues: MTEKEYNTRQTQNYALCPKCLSRIYRNPKDRDNSIIPLINNTQKCSICNNLLLNEDKIFKLILKKIKMLKIEFDTFLIATQINNQTITKNQKEIYKITNYHGNNDIKHQIRRDISRLIEEKLGKTYDYKNPEVVIMVKIRKKPYKHNPYPEISNVNIFIDSNPIFIEGKYRKLVRGIPQTKWPCTHCKGKGCEACDYTGQQYKDTVEDLISREILPMTNGNTTKFHGSGREDIDVRMLGEGRPFVIEVKHPFKRKIDLKFLRVLVNSHSDGKIEINDLKYVTKERKASIKNSSVESYKIYSAIAEFENGVTSKDIYNIEKLKTIDQRTPIRVEHRRADLIRTREIKNIEVERINSKKLHLIIKCQGGLYIKELISGDNNRTKPSVSSITNNQAECTQLDVLKVHIPE.

Asp232 functions as the Nucleophile in the catalytic mechanism. Substrate-binding residues include Tyr300 and Tyr369.

This sequence belongs to the pseudouridine synthase Pus10 family.

The catalysed reaction is uridine(54) in tRNA = pseudouridine(54) in tRNA. It carries out the reaction uridine(55) in tRNA = pseudouridine(55) in tRNA. In terms of biological role, responsible for synthesis of pseudouridine from uracil-54 and uracil-55 in the psi GC loop of transfer RNAs. The sequence is that of tRNA pseudouridine synthase Pus10 from Methanosphaera stadtmanae (strain ATCC 43021 / DSM 3091 / JCM 11832 / MCB-3).